A 103-amino-acid chain; its full sequence is Ribonuclease VapC14 (103 aa).

A PINc domain is found at 3 to 74; the sequence is YVLDTNVVSA…WFDDKVLRIF (72 aa). Aspartate 6 is a binding site for Mg(2+).

The protein belongs to the PINc/VapC protein family. Requires Mg(2+) as cofactor.

Toxic component of a type II toxin-antitoxin (TA) system. An RNase. The cognate antitoxin is VapB14. This Mycobacterium tuberculosis (strain CDC 1551 / Oshkosh) protein is Ribonuclease VapC14 (vapC14).